Consider the following 457-residue polypeptide: Chromosomal replication initiator protein DnaA (457 aa).

A domain I, interacts with DnaA modulators region spans residues 1–90 (MDTNNNIEKE…HSVDVRIEVA (90 aa)). Residues 91–112 (PKIQINAQSNINYKAIKTSVKD) form a domain II region. The segment at 113-323 (SYTFENFVVG…GAIIKISVNA (211 aa)) is domain III, AAA+ region. ATP-binding residues include glycine 153, glycine 155, lysine 156, and threonine 157. Residues 324-457 (NLMNASIDLN…DKKTAFNSSE (134 aa)) are domain IV, binds dsDNA.

It belongs to the DnaA family. Oligomerizes as a right-handed, spiral filament on DNA at oriC. Interacts via domain I with HobA. In a crystal with domains I and II of DnaA HobA forms tetramers with DnaA fragments bound at the dimer interface of the tetramer.

The protein resides in the cytoplasm. The protein localises to the cell inner membrane. Its function is as follows. Plays an essential role in the initiation and regulation of chromosomal replication. ATP-DnaA binds to the origin of replication (oriC) to initiate formation of the DNA replication initiation complex once per cell cycle. Binds the DnaA box (a 9 base pair repeat at the origin) and separates the double-stranded (ds)DNA. Forms a right-handed helical filament on oriC DNA; dsDNA binds to the exterior of the filament while single-stranded (ss)DNA is stabiized in the filament's interior. The ATP-DnaA-oriC complex binds and stabilizes one strand of the AT-rich DNA unwinding element (DUE), permitting loading of DNA polymerase. After initiation quickly degrades to an ADP-DnaA complex that is not apt for DNA replication. Binds acidic phospholipids. The DnaA box is 5'-TTATC[CA]A[CA]A-3' in this bacterium cycle. Multiple discrete DnaA-oriC complexes can be seen as DnaA levels increase. Binding of DnaA to oriC is increased by HobA; some chi-type structures can be seen by electron microscopy. Strand separation requires the DnaA boxes and adjacent DnaA-trio motifs but works equally well with ADP or ATP. This chain is Chromosomal replication initiator protein DnaA, found in Helicobacter pylori (strain ATCC 700392 / 26695) (Campylobacter pylori).